A 345-amino-acid polypeptide reads, in one-letter code: 3-isopropylmalate dehydrogenase (345 aa).

74 to 87 is an NAD(+) binding site; sequence GPKWDGLPRKIRPE. Residues arginine 94, arginine 104, arginine 132, and aspartate 217 each contribute to the substrate site. Mg(2+) contacts are provided by aspartate 217, aspartate 241, and aspartate 245. Position 274-286 (274-286) interacts with NAD(+); sequence GSAPDIAGKGIAN.

This sequence belongs to the isocitrate and isopropylmalate dehydrogenases family. LeuB type 1 subfamily. Homodimer. Mg(2+) is required as a cofactor. Mn(2+) serves as cofactor.

Its subcellular location is the cytoplasm. It catalyses the reaction (2R,3S)-3-isopropylmalate + NAD(+) = 4-methyl-2-oxopentanoate + CO2 + NADH. The protein operates within amino-acid biosynthesis; L-leucine biosynthesis; L-leucine from 3-methyl-2-oxobutanoate: step 3/4. In terms of biological role, catalyzes the oxidation of 3-carboxy-2-hydroxy-4-methylpentanoate (3-isopropylmalate) to 3-carboxy-4-methyl-2-oxopentanoate. The product decarboxylates to 4-methyl-2 oxopentanoate. The chain is 3-isopropylmalate dehydrogenase (leuB) from Thermus thermophilus (strain ATCC 27634 / DSM 579 / HB8).